Consider the following 503-residue polypeptide: Probable cytosol aminopeptidase (503 aa).

Mn(2+)-binding residues include K270 and D275. The active site involves K282. Mn(2+)-binding residues include D293, D352, and E354. R356 is an active-site residue.

Belongs to the peptidase M17 family. Mn(2+) is required as a cofactor.

Its subcellular location is the cytoplasm. It carries out the reaction Release of an N-terminal amino acid, Xaa-|-Yaa-, in which Xaa is preferably Leu, but may be other amino acids including Pro although not Arg or Lys, and Yaa may be Pro. Amino acid amides and methyl esters are also readily hydrolyzed, but rates on arylamides are exceedingly low.. It catalyses the reaction Release of an N-terminal amino acid, preferentially leucine, but not glutamic or aspartic acids.. In terms of biological role, presumably involved in the processing and regular turnover of intracellular proteins. Catalyzes the removal of unsubstituted N-terminal amino acids from various peptides. The chain is Probable cytosol aminopeptidase from Salmonella arizonae (strain ATCC BAA-731 / CDC346-86 / RSK2980).